We begin with the raw amino-acid sequence, 590 residues long: Myo-inositol transporter 3A (590 aa).

At 1–57 the chain is on the cytoplasmic side; that stretch reads MSATHIENRDDSFLENKGIDHIGRPENNNGSQEPPSPSGFGGHLIDENLVRVEGEDK. The span at 15–24 shows a compositional bias: basic and acidic residues; sequence ENKGIDHIGR. The interval 15–40 is disordered; that stretch reads ENKGIDHIGRPENNNGSQEPPSPSGF. The helical transmembrane segment at 58–78 threads the bilayer; that stretch reads VTWYLCFLISASAIAGFLFGY. Residues 79–105 are Extracellular-facing; the sequence is DTGVVGVALPLVGTDLGGSALNSSQQE. N-linked (GlcNAc...) asparagine glycosylation is present at asparagine 100. Residues 106–126 form a helical membrane-spanning segment; it reads IITAGTTIGAIFGSAILGGWG. Topologically, residues 127 to 132 are cytoplasmic; the sequence is DRLGRK. A helical membrane pass occupies residues 133-153; it reads GAILVSDVFFTIGAVIIASSY. Over 154-157 the chain is Extracellular; the sequence is SVPQ. The chain crosses the membrane as a helical span at residues 158–178; that stretch reads IIVGRIILGIGVGGAAVIAPL. The Cytoplasmic segment spans residues 179 to 192; sequence FITETAPTAVRGRC. A helical membrane pass occupies residues 193-213; sequence IGVNAFFIPFGQVVSDAIGAG. Topologically, residues 214–222 are extracellular; sequence VQNMHNGWR. The helical transmembrane segment at 223–243 threads the bilayer; it reads LLFALGAVPSLLQLLLFHYLP. Topologically, residues 244-325 are cytoplasmic; that stretch reads ESPRILILKG…AVSALQAAGQ (82 aa). Residues 326-346 form a helical membrane-spanning segment; that stretch reads LTGFNTLLYYAGTLFGLLGLS. Topologically, residues 347–349 are extracellular; the sequence is NPA. Residues 350–370 form a helical membrane-spanning segment; sequence LGGLIPAGTNAVFVLIGMSLV. At 371–376 the chain is on the cytoplasmic side; sequence DKVGRR. A helical transmembrane segment spans residues 377 to 397; it reads GLLLIGVPIMLLGHVWNIVSF. Over 398–420 the chain is Extracellular; sequence YYMCKPTGGFLDTSYSYDTTDVG. The chain crosses the membrane as a helical span at residues 421 to 441; it reads IVIGGIVFFVVGYGLTYSHLV. Over 442–455 the chain is Cytoplasmic; sequence WYQAEYLTLEVRSM. The chain crosses the membrane as a helical span at residues 456 to 476; that stretch reads GSGIATTVCWIANLVVSVSYL. Residues 477 to 485 lie on the Extracellular side of the membrane; it reads SELETMTPS. The chain crosses the membrane as a helical span at residues 486–506; sequence GTYGFYFGISVIGFVFLVFCL. The Cytoplasmic portion of the chain corresponds to 507–590; the sequence is PETKQLSIDE…GGKRTPSASV (84 aa).

The protein belongs to the major facilitator superfamily. Sugar transporter (TC 2.A.1.1) family.

It localises to the cell membrane. The catalysed reaction is myo-inositol(out) + H(+)(out) = myo-inositol(in) + H(+)(in). Its function is as follows. Transporter for myo-inositol. In Cryptococcus neoformans var. grubii serotype A (strain H99 / ATCC 208821 / CBS 10515 / FGSC 9487) (Filobasidiella neoformans var. grubii), this protein is Myo-inositol transporter 3A (ITR3A).